The sequence spans 411 residues: Methylthioribose-1-phosphate isomerase (411 aa).

Serine 2 is modified (N-acetylserine). Aspartate 280 (proton donor) is an active-site residue. Serine 351 bears the Phosphoserine mark.

The protein belongs to the eIF-2B alpha/beta/delta subunits family. MtnA subfamily. As to quaternary structure, homodimer.

It is found in the cytoplasm. The protein localises to the nucleus. It carries out the reaction 5-(methylsulfanyl)-alpha-D-ribose 1-phosphate = 5-(methylsulfanyl)-D-ribulose 1-phosphate. It participates in amino-acid biosynthesis; L-methionine biosynthesis via salvage pathway; L-methionine from S-methyl-5-thio-alpha-D-ribose 1-phosphate: step 1/6. In terms of biological role, catalyzes the interconversion of methylthioribose-1-phosphate (MTR-1-P) into methylthioribulose-1-phosphate (MTRu-1-P). In Saccharomyces cerevisiae (strain JAY291) (Baker's yeast), this protein is Methylthioribose-1-phosphate isomerase.